We begin with the raw amino-acid sequence, 695 residues long: Elongation factor G (695 aa).

Residues S5–T280 form the tr-type G domain. Residues A14 to T21, D78 to H82, and N132 to D135 contribute to the GTP site. The segment at P279–V299 is disordered.

This sequence belongs to the TRAFAC class translation factor GTPase superfamily. Classic translation factor GTPase family. EF-G/EF-2 subfamily.

It localises to the cytoplasm. Functionally, catalyzes the GTP-dependent ribosomal translocation step during translation elongation. During this step, the ribosome changes from the pre-translocational (PRE) to the post-translocational (POST) state as the newly formed A-site-bound peptidyl-tRNA and P-site-bound deacylated tRNA move to the P and E sites, respectively. Catalyzes the coordinated movement of the two tRNA molecules, the mRNA and conformational changes in the ribosome. The sequence is that of Elongation factor G from Alteromonas mediterranea (strain DSM 17117 / CIP 110805 / LMG 28347 / Deep ecotype).